The following is a 530-amino-acid chain: Arginine-containing cyclodipeptide synthase pthA (530 aa).

The short motif at 419–423 (DDRAE) is the Conserved DDXXE motif element.

Belongs to the arginine-containing cyclodipeptide synthase family.

The catalysed reaction is L-aspartyl-tRNA(Asp) + L-arginyl-tRNA(Arg) = cyclo(L-arginyl-L-aspartyl) + tRNA(Asp) + tRNA(Arg) + 2 H(+). Its pathway is secondary metabolite biosynthesis. Functionally, arginine-containing cyclodipeptide synthase; part of the cluster that mediates the biosynthesis of a highly modified cyclo-arginine-aspartate dipeptide (cRD). Within the pathway, pthA acts as the scaffold-generating enzyme and is responsible for formation of the cyclo-Arg-Asp diketopiperazine (cRW) from L-arginyl-tRNA(Arg) + L-aspartyl-tRNA(Asp). Additional enzymes from the cluster then further modify the cyclo-Arg-Asp diketopiperazine (cRW) scaffold. This chain is Arginine-containing cyclodipeptide synthase pthA, found in Penicillium thymicola.